Consider the following 288-residue polypeptide: Small ribosomal subunit biogenesis GTPase RsgA (288 aa).

Residues 61–218 (TNKLIRPPVS…IVDTPGFSSL (158 aa)) enclose the CP-type G domain. GTP-binding positions include 110–113 (NKID) and 161–169 (GPSGVGKST). Zn(2+) contacts are provided by cysteine 242, cysteine 247, histidine 249, and cysteine 255.

Belongs to the TRAFAC class YlqF/YawG GTPase family. RsgA subfamily. As to quaternary structure, monomer. Associates with 30S ribosomal subunit, binds 16S rRNA. The cofactor is Zn(2+).

Its subcellular location is the cytoplasm. Its function is as follows. One of several proteins that assist in the late maturation steps of the functional core of the 30S ribosomal subunit. Helps release RbfA from mature subunits. May play a role in the assembly of ribosomal proteins into the subunit. Circularly permuted GTPase that catalyzes slow GTP hydrolysis, GTPase activity is stimulated by the 30S ribosomal subunit. This chain is Small ribosomal subunit biogenesis GTPase RsgA, found in Clostridium acetobutylicum (strain ATCC 824 / DSM 792 / JCM 1419 / IAM 19013 / LMG 5710 / NBRC 13948 / NRRL B-527 / VKM B-1787 / 2291 / W).